A 231-amino-acid chain; its full sequence is Ion-translocating oxidoreductase complex subunit E (231 aa).

Helical transmembrane passes span 18 to 38 (ALVQ…ATNA), 39 to 59 (LGLG…ISTL), 63 to 83 (TPAE…VSAV), 86 to 106 (LINA…PLIV), 125 to 145 (ALSA…MFVL), and 182 to 202 (PFLL…MLAG).

It belongs to the NqrDE/RnfAE family. The complex is composed of six subunits: RsxA, RsxB, RsxC, RsxD, RsxE and RsxG.

The protein localises to the cell inner membrane. Its function is as follows. Part of a membrane-bound complex that couples electron transfer with translocation of ions across the membrane. Required to maintain the reduced state of SoxR. In Escherichia coli O7:K1 (strain IAI39 / ExPEC), this protein is Ion-translocating oxidoreductase complex subunit E.